We begin with the raw amino-acid sequence, 964 residues long: DNA primase (964 aa).

Positions 807-844 (SAPSLPTLVGRGGGGEGGASSDYEEERAVGSDEEEDDD) are disordered.

It belongs to the herpesviridae DNA primase family. In terms of assembly, associates with the helicase and the primase-associated factor to form the helicase-primase factor.

It is found in the host nucleus. In terms of biological role, essential component of the helicase/primase complex. Unwinds the DNA at the replication forks and generates single-stranded DNA for both leading and lagging strand synthesis. The primase initiates primer synthesis and thereby produces large amount of short RNA primers on the lagging strand that the polymerase elongates using dNTPs. The protein is DNA primase (UL70) of Mus musculus (Mouse).